The sequence spans 336 residues: tRNA N6-adenosine threonylcarbamoyltransferase (336 aa).

The Fe cation site is built by His-111 and His-115. Substrate is bound by residues 134-138 (VVSGG), Asp-167, Gly-180, Asp-184, and Asn-272. Position 300 (Asp-300) interacts with Fe cation.

This sequence belongs to the KAE1 / TsaD family. Fe(2+) is required as a cofactor.

The protein localises to the cytoplasm. The enzyme catalyses L-threonylcarbamoyladenylate + adenosine(37) in tRNA = N(6)-L-threonylcarbamoyladenosine(37) in tRNA + AMP + H(+). Its function is as follows. Required for the formation of a threonylcarbamoyl group on adenosine at position 37 (t(6)A37) in tRNAs that read codons beginning with adenine. Is involved in the transfer of the threonylcarbamoyl moiety of threonylcarbamoyl-AMP (TC-AMP) to the N6 group of A37, together with TsaE and TsaB. TsaD likely plays a direct catalytic role in this reaction. This is tRNA N6-adenosine threonylcarbamoyltransferase from Caldicellulosiruptor saccharolyticus (strain ATCC 43494 / DSM 8903 / Tp8T 6331).